We begin with the raw amino-acid sequence, 274 residues long: NH(3)-dependent NAD(+) synthetase (274 aa).

46–53 is a binding site for ATP; that stretch reads GISGGQDS. Mg(2+) is bound at residue D52. R140 serves as a coordination point for deamido-NAD(+). T160 is a binding site for ATP. E165 serves as a coordination point for Mg(2+). Deamido-NAD(+) is bound by residues K173 and D180. K189 and T211 together coordinate ATP. 260–261 is a binding site for deamido-NAD(+); the sequence is HK.

This sequence belongs to the NAD synthetase family. In terms of assembly, homodimer.

The enzyme catalyses deamido-NAD(+) + NH4(+) + ATP = AMP + diphosphate + NAD(+) + H(+). It participates in cofactor biosynthesis; NAD(+) biosynthesis; NAD(+) from deamido-NAD(+) (ammonia route): step 1/1. Functionally, catalyzes the ATP-dependent amidation of deamido-NAD to form NAD. Uses ammonia as a nitrogen source. The protein is NH(3)-dependent NAD(+) synthetase of Streptococcus equi subsp. zooepidemicus (strain MGCS10565).